A 284-amino-acid chain; its full sequence is 2-dehydro-3-deoxyphosphooctonate aldolase (284 aa).

The protein belongs to the KdsA family.

It localises to the cytoplasm. The enzyme catalyses D-arabinose 5-phosphate + phosphoenolpyruvate + H2O = 3-deoxy-alpha-D-manno-2-octulosonate-8-phosphate + phosphate. Its pathway is carbohydrate biosynthesis; 3-deoxy-D-manno-octulosonate biosynthesis; 3-deoxy-D-manno-octulosonate from D-ribulose 5-phosphate: step 2/3. It participates in bacterial outer membrane biogenesis; lipopolysaccharide biosynthesis. The polypeptide is 2-dehydro-3-deoxyphosphooctonate aldolase (Burkholderia cenocepacia (strain HI2424)).